A 196-amino-acid chain; its full sequence is Interleukin-23 subunit alpha (196 aa).

A signal peptide spans 1–21 (MLDCRAIILLWLLPWATQGLA).

It belongs to the IL-6 superfamily. Heterodimer with IL12B; disulfide-linked. The heterodimer is known as interleukin IL-23. Interacts with IL23R; this interaction enables recruitment of IL12RB1.

It is found in the secreted. Its function is as follows. Associates with IL12B to form the pro-inflammatory cytokine IL-23 that plays different roles in innate and adaptive immunity. Released by antigen-presenting cells such as dendritic cells or macrophages, binds to a heterodimeric receptor complex composed of IL12RB1 and IL23R to activate JAK2 and TYK2 which then phosphorylate the receptor to form a docking site leading to the phosphorylation of STAT3 and STAT4. This process leads to activation of several pathways including p38 MAPK or NF-kappa-B and promotes the production of pro-inflammatory cytokines such as interleukin-17A/IL17A. In turn, participates in the early and effective intracellular bacterial clearance. Promotes the expansion and survival of T-helper 17 cells, a CD4-positive helper T-cell subset that produces IL-17, as well as other IL-17-producing cells. The sequence is that of Interleukin-23 subunit alpha (Il23a) from Rattus norvegicus (Rat).